Consider the following 557-residue polypeptide: UvrABC system protein C (557 aa).

In terms of domain architecture, GIY-YIG spans 14-89; it reads EEPGVYIFKN…IKKYRPKYNV (76 aa). A UVR domain is found at 194–229; that stretch reads EEVFDYLKEKMETHSKMLDFENAAKYRDLLLNLSNV.

It belongs to the UvrC family. Interacts with UvrB in an incision complex.

It is found in the cytoplasm. In terms of biological role, the UvrABC repair system catalyzes the recognition and processing of DNA lesions. UvrC both incises the 5' and 3' sides of the lesion. The N-terminal half is responsible for the 3' incision and the C-terminal half is responsible for the 5' incision. This is UvrABC system protein C from Thermotoga maritima (strain ATCC 43589 / DSM 3109 / JCM 10099 / NBRC 100826 / MSB8).